A 161-amino-acid polypeptide reads, in one-letter code: Phosphopantetheine adenylyltransferase (161 aa).

S8 is a binding site for substrate. ATP-binding positions include 8-9 (SF) and H16. Substrate contacts are provided by residues 36–40 (ENPRK), L72, and R86. Residues 87 to 89 (GLR), E97, and 122 to 128 (FSFISSS) each bind ATP. Residue E132 coordinates substrate.

It belongs to the bacterial CoaD family. In terms of assembly, homohexamer. It depends on Mg(2+) as a cofactor.

It localises to the cytoplasm. It catalyses the reaction (R)-4'-phosphopantetheine + ATP + H(+) = 3'-dephospho-CoA + diphosphate. The protein operates within cofactor biosynthesis; coenzyme A biosynthesis; CoA from (R)-pantothenate: step 4/5. Its function is as follows. Reversibly transfers an adenylyl group from ATP to 4'-phosphopantetheine, yielding dephospho-CoA (dPCoA) and pyrophosphate. The chain is Phosphopantetheine adenylyltransferase from Thermotoga maritima (strain ATCC 43589 / DSM 3109 / JCM 10099 / NBRC 100826 / MSB8).